A 397-amino-acid polypeptide reads, in one-letter code: CCA-adding enzyme (397 aa).

ATP contacts are provided by glycine 26 and arginine 29. Residues glycine 26 and arginine 29 each contribute to the CTP site. Residues aspartate 39 and aspartate 41 each coordinate Mg(2+). Arginine 110, aspartate 153, arginine 156, arginine 159, and arginine 162 together coordinate ATP. 5 residues coordinate CTP: arginine 110, aspartate 153, arginine 156, arginine 159, and arginine 162.

The protein belongs to the tRNA nucleotidyltransferase/poly(A) polymerase family. Bacterial CCA-adding enzyme type 3 subfamily. Homodimer. It depends on Mg(2+) as a cofactor.

The enzyme catalyses a tRNA precursor + 2 CTP + ATP = a tRNA with a 3' CCA end + 3 diphosphate. It carries out the reaction a tRNA with a 3' CCA end + 2 CTP + ATP = a tRNA with a 3' CCACCA end + 3 diphosphate. Functionally, catalyzes the addition and repair of the essential 3'-terminal CCA sequence in tRNAs without using a nucleic acid template. Adds these three nucleotides in the order of C, C, and A to the tRNA nucleotide-73, using CTP and ATP as substrates and producing inorganic pyrophosphate. tRNA 3'-terminal CCA addition is required both for tRNA processing and repair. Also involved in tRNA surveillance by mediating tandem CCA addition to generate a CCACCA at the 3' terminus of unstable tRNAs. While stable tRNAs receive only 3'-terminal CCA, unstable tRNAs are marked with CCACCA and rapidly degraded. This is CCA-adding enzyme from Bacillus cereus (strain ZK / E33L).